We begin with the raw amino-acid sequence, 312 residues long: Dipeptide transport ATP-binding protein DppF (312 aa).

Positions 10–255 (IKNLDLTFNK…PIHPYTKSLL (246 aa)) constitute an ABC transporter domain. Residue 45 to 52 (GESGSGKT) coordinates ATP.

Belongs to the ABC transporter superfamily. In terms of assembly, the complex is composed of two ATP-binding proteins (DppD and DppF), two transmembrane proteins (DppB and DppC) and a solute-binding protein (DppA).

It localises to the cell membrane. It carries out the reaction a dipeptide(out) + ATP + H2O = a dipeptide(in) + ADP + phosphate + H(+). Its function is as follows. Part of the ABC transporter DppABCDF involved in dipeptide transport. Responsible for energy coupling to the transport system. This is Dipeptide transport ATP-binding protein DppF from Lactococcus lactis subsp. cremoris (strain MG1363).